Reading from the N-terminus, the 201-residue chain is Adenylyl-sulfate kinase (201 aa).

ATP is bound at residue 35 to 42 (GLSGSGKS). Catalysis depends on S109, which acts as the Phosphoserine intermediate.

It belongs to the APS kinase family.

The catalysed reaction is adenosine 5'-phosphosulfate + ATP = 3'-phosphoadenylyl sulfate + ADP + H(+). Its pathway is sulfur metabolism; hydrogen sulfide biosynthesis; sulfite from sulfate: step 2/3. Functionally, catalyzes the synthesis of activated sulfate. The sequence is that of Adenylyl-sulfate kinase from Salmonella paratyphi C (strain RKS4594).